A 134-amino-acid chain; its full sequence is Transcription antitermination protein NusB (134 aa).

This sequence belongs to the NusB family.

Involved in transcription antitermination. Required for transcription of ribosomal RNA (rRNA) genes. Binds specifically to the boxA antiterminator sequence of the ribosomal RNA (rrn) operons. The protein is Transcription antitermination protein NusB of Shewanella loihica (strain ATCC BAA-1088 / PV-4).